A 557-amino-acid polypeptide reads, in one-letter code: Kelch repeat and BTB domain-containing protein 2 (557 aa).

In terms of domain architecture, BTB spans 26 to 95; that stretch reads CDVIITIGDG…LYNRHISSMN (70 aa). In terms of domain architecture, BACK spans 133–223; the sequence is HKLYEMVHIP…CIDIQNLDKK (91 aa). Kelch repeat units follow at residues 305 to 352, 353 to 399, and 401 to 464; these read EIII…VIDD, TIYA…VLDQ, and IYII…SHKD.

Interacts (via BTB domain) with host CUL3.

It is found in the host cytoplasm. In terms of biological role, probable substrate-specific adapter of CUL3-containing E3 ubiquitin-protein ligases which mediate the ubiquitination and subsequent proteasomal degradation of host target proteins. The protein is Kelch repeat and BTB domain-containing protein 2 (KBTB2) of Bos taurus (Bovine).